The sequence spans 130 residues: Small ribosomal subunit protein uS8 (130 aa).

The protein belongs to the universal ribosomal protein uS8 family. Part of the 30S ribosomal subunit. Contacts proteins S5 and S12.

In terms of biological role, one of the primary rRNA binding proteins, it binds directly to 16S rRNA central domain where it helps coordinate assembly of the platform of the 30S subunit. The sequence is that of Small ribosomal subunit protein uS8 from Cellvibrio japonicus (strain Ueda107) (Pseudomonas fluorescens subsp. cellulosa).